The primary structure comprises 158 residues: NAD(P)H-quinone oxidoreductase subunit N (158 aa).

Belongs to the complex I NdhN subunit family. NDH-1 can be composed of about 15 different subunits; different subcomplexes with different compositions have been identified which probably have different functions.

It is found in the cellular thylakoid membrane. It carries out the reaction a plastoquinone + NADH + (n+1) H(+)(in) = a plastoquinol + NAD(+) + n H(+)(out). It catalyses the reaction a plastoquinone + NADPH + (n+1) H(+)(in) = a plastoquinol + NADP(+) + n H(+)(out). Functionally, NDH-1 shuttles electrons from an unknown electron donor, via FMN and iron-sulfur (Fe-S) centers, to quinones in the respiratory and/or the photosynthetic chain. The immediate electron acceptor for the enzyme in this species is believed to be plastoquinone. Couples the redox reaction to proton translocation, and thus conserves the redox energy in a proton gradient. Cyanobacterial NDH-1 also plays a role in inorganic carbon-concentration. This Microcystis aeruginosa (strain NIES-843 / IAM M-2473) protein is NAD(P)H-quinone oxidoreductase subunit N.